We begin with the raw amino-acid sequence, 93 residues long: Large ribosomal subunit protein bL36m (93 aa).

The N-terminal 35 residues, M1–S35, are a transit peptide targeting the mitochondrion.

It belongs to the bacterial ribosomal protein bL36 family. In terms of assembly, component of the mitochondrial large ribosomal subunit (mt-LSU). Mature yeast 74S mitochondrial ribosomes consist of a small (37S) and a large (54S) subunit. The 37S small subunit contains a 15S ribosomal RNA (15S mt-rRNA) and 34 different proteins. The 54S large subunit contains a 21S rRNA (21S mt-rRNA) and 46 different proteins. bL36m has a zinc binding site.

It is found in the mitochondrion. Component of the mitochondrial ribosome (mitoribosome), a dedicated translation machinery responsible for the synthesis of mitochondrial genome-encoded proteins, including at least some of the essential transmembrane subunits of the mitochondrial respiratory chain. The mitoribosomes are attached to the mitochondrial inner membrane and translation products are cotranslationally integrated into the membrane. bL36m may be involved in a process influencing telomere capping. The protein is Large ribosomal subunit protein bL36m (RTC6) of Saccharomyces cerevisiae (strain ATCC 204508 / S288c) (Baker's yeast).